Consider the following 395-residue polypeptide: Acetylornithine aminotransferase (395 aa).

Pyridoxal 5'-phosphate-binding positions include 117-118 (GA) and Phe144. N(2)-acetyl-L-ornithine is bound at residue Arg147. Pyridoxal 5'-phosphate is bound at residue 230 to 233 (DEVQ). The residue at position 259 (Lys259) is an N6-(pyridoxal phosphate)lysine. Ser285 contacts N(2)-acetyl-L-ornithine. Residue Thr286 coordinates pyridoxal 5'-phosphate.

This sequence belongs to the class-III pyridoxal-phosphate-dependent aminotransferase family. ArgD subfamily. In terms of assembly, homodimer. Pyridoxal 5'-phosphate is required as a cofactor.

The protein localises to the cytoplasm. It carries out the reaction N(2)-acetyl-L-ornithine + 2-oxoglutarate = N-acetyl-L-glutamate 5-semialdehyde + L-glutamate. Its pathway is amino-acid biosynthesis; L-arginine biosynthesis; N(2)-acetyl-L-ornithine from L-glutamate: step 4/4. In Methanosarcina mazei (strain ATCC BAA-159 / DSM 3647 / Goe1 / Go1 / JCM 11833 / OCM 88) (Methanosarcina frisia), this protein is Acetylornithine aminotransferase.